The primary structure comprises 128 residues: Glycine cleavage system H protein (128 aa).

The Lipoyl-binding domain occupies 22 to 104 (VATVGITEHA…YGEGWIFKMK (83 aa)). K63 is subject to N6-lipoyllysine.

This sequence belongs to the GcvH family. The glycine cleavage system is composed of four proteins: P, T, L and H. (R)-lipoate serves as cofactor.

In terms of biological role, the glycine cleavage system catalyzes the degradation of glycine. The H protein shuttles the methylamine group of glycine from the P protein to the T protein. The protein is Glycine cleavage system H protein of Methylacidiphilum infernorum (isolate V4) (Methylokorus infernorum (strain V4)).